The primary structure comprises 83 residues: MSGNTGERPFADIITSIRYWVIHSITIPSLFIAGWLFVSTGLAYDVFGSPRPNEYFTENRQEVPLITGRFNSLEQVDEFTRSF.

A helical membrane pass occupies residues 21-35 (VIHSITIPSLFIAGW). His23 is a heme binding site.

It belongs to the PsbE/PsbF family. Heterodimer of an alpha subunit and a beta subunit. PSII is composed of 1 copy each of membrane proteins PsbA, PsbB, PsbC, PsbD, PsbE, PsbF, PsbH, PsbI, PsbJ, PsbK, PsbL, PsbM, PsbT, PsbX, PsbY, PsbZ, Psb30/Ycf12, at least 3 peripheral proteins of the oxygen-evolving complex and a large number of cofactors. It forms dimeric complexes. The cofactor is heme b.

The protein localises to the plastid. It localises to the chloroplast thylakoid membrane. Its function is as follows. This b-type cytochrome is tightly associated with the reaction center of photosystem II (PSII). PSII is a light-driven water:plastoquinone oxidoreductase that uses light energy to abstract electrons from H(2)O, generating O(2) and a proton gradient subsequently used for ATP formation. It consists of a core antenna complex that captures photons, and an electron transfer chain that converts photonic excitation into a charge separation. The sequence is that of Cytochrome b559 subunit alpha from Anthoceros angustus (Hornwort).